The chain runs to 132 residues: U-scoloptoxin(05)-Er3a (132 aa).

An N-terminal signal peptide occupies residues 1 to 19 (MRSWFVFVALLAVVFLPSS).

It belongs to the scoloptoxin-05 family. Post-translationally, contains 5 disulfide bonds. As to expression, expressed by the venom gland.

It is found in the secreted. The protein is U-scoloptoxin(05)-Er3a of Ethmostigmus rubripes (Giant centipede).